Consider the following 360-residue polypeptide: Peptide chain release factor 1 (360 aa).

N5-methylglutamine is present on Gln-235. Residues 281–307 show a composition bias toward basic and acidic residues; it reads ERQRADSERSADRRNQVGSGDRSERIR. The segment at 281–310 is disordered; the sequence is ERQRADSERSADRRNQVGSGDRSERIRTYN.

This sequence belongs to the prokaryotic/mitochondrial release factor family. Post-translationally, methylated by PrmC. Methylation increases the termination efficiency of RF1.

It localises to the cytoplasm. Functionally, peptide chain release factor 1 directs the termination of translation in response to the peptide chain termination codons UAG and UAA. The sequence is that of Peptide chain release factor 1 from Sinorhizobium medicae (strain WSM419) (Ensifer medicae).